The chain runs to 642 residues: Threonine--tRNA ligase (642 aa).

The 61-residue stretch at 1–61 (MPVITLPDGS…SEDANLVIFT (61 aa)) folds into the TGS domain. Positions 243–534 (DHRKLAKKFD…LIEHYEGSFP (292 aa)) are catalytic. Residues C334, H385, and H511 each contribute to the Zn(2+) site.

The protein belongs to the class-II aminoacyl-tRNA synthetase family. In terms of assembly, homodimer. Zn(2+) is required as a cofactor.

The protein resides in the cytoplasm. It catalyses the reaction tRNA(Thr) + L-threonine + ATP = L-threonyl-tRNA(Thr) + AMP + diphosphate + H(+). Its function is as follows. Catalyzes the attachment of threonine to tRNA(Thr) in a two-step reaction: L-threonine is first activated by ATP to form Thr-AMP and then transferred to the acceptor end of tRNA(Thr). Also edits incorrectly charged L-seryl-tRNA(Thr). This Cellvibrio japonicus (strain Ueda107) (Pseudomonas fluorescens subsp. cellulosa) protein is Threonine--tRNA ligase.